A 240-amino-acid polypeptide reads, in one-letter code: Large ribosomal subunit protein uL2 (240 aa).

The segment covering 1 to 11 (MGKRLISQNRG) has biased composition (polar residues). Disordered stretches follow at residues 1–25 (MGKR…HKRK) and 207–240 (GGRH…TGKR). Composition is skewed to basic residues over residues 13 to 25 (GTPK…HKRK) and 224 to 240 (SPGR…TGKR).

Belongs to the universal ribosomal protein uL2 family. In terms of assembly, part of the 50S ribosomal subunit. Forms a bridge to the 30S subunit in the 70S ribosome.

In terms of biological role, one of the primary rRNA binding proteins. Required for association of the 30S and 50S subunits to form the 70S ribosome, for tRNA binding and peptide bond formation. It has been suggested to have peptidyltransferase activity; this is somewhat controversial. Makes several contacts with the 16S rRNA in the 70S ribosome. This is Large ribosomal subunit protein uL2 from Methanococcus maripaludis (strain DSM 14266 / JCM 13030 / NBRC 101832 / S2 / LL).